A 406-amino-acid chain; its full sequence is Lissencephaly-1 homolog (406 aa).

Residues 7 to 39 enclose the LisH domain; sequence QREELNKAIADYLRSNGYESALEAFQKEAEMPG. Positions 54 to 81 form a coiled coil; it reads TSVIRLQKKVMDLEAKLAEAEKEFQSGG. Positions 74 to 89 are enriched in basic and acidic residues; that stretch reads EKEFQSGGPNKKERSP. Positions 74-99 are disordered; it reads EKEFQSGGPNKKERSPSEWIPRPPAR. WD repeat units lie at residues 104-145, 146-185, 188-227, 230-269, 272-329, 332-371, and 374-406; these read GHRS…RTLK, GHTD…NIKT, GHDH…CVKT, GHRE…CKAE, EHEH…CIMT, GHDN…CQKT, and AHQH…WECR.

Belongs to the WD repeat LIS1/nudF family.

The protein resides in the cytoplasm. The protein localises to the cytoskeleton. It is found in the microtubule organizing center. It localises to the centrosome. Positively regulates the activity of the minus-end directed microtubule motor protein dynein. May enhance dynein-mediated microtubule sliding by targeting dynein to the microtubule plus end. Required for several dynein- and microtubule-dependent processes. This chain is Lissencephaly-1 homolog, found in Branchiostoma floridae (Florida lancelet).